We begin with the raw amino-acid sequence, 596 residues long: Aspartate--tRNA(Asp/Asn) ligase (596 aa).

L-aspartate is bound at residue E172. An aspartate region spans residues 196–199 (QLFK). Residue R218 coordinates L-aspartate. ATP contacts are provided by residues 218–220 (RDE) and Q227. H455 is a binding site for L-aspartate. E489 provides a ligand contact to ATP. An L-aspartate-binding site is contributed by R496. Position 541-544 (541-544 (GLDR)) interacts with ATP.

Belongs to the class-II aminoacyl-tRNA synthetase family. Type 1 subfamily. Homodimer.

Its subcellular location is the cytoplasm. The enzyme catalyses tRNA(Asx) + L-aspartate + ATP = L-aspartyl-tRNA(Asx) + AMP + diphosphate. Its function is as follows. Aspartyl-tRNA synthetase with relaxed tRNA specificity since it is able to aspartylate not only its cognate tRNA(Asp) but also tRNA(Asn). Reaction proceeds in two steps: L-aspartate is first activated by ATP to form Asp-AMP and then transferred to the acceptor end of tRNA(Asp/Asn). This is Aspartate--tRNA(Asp/Asn) ligase from Bordetella avium (strain 197N).